The chain runs to 138 residues: MENKRVEHFLFELVSPEKLVFSEQVISVVIPSASGALTVMAHHEPLVASIVLGSVRVLTSSGEKLFAVCRGVANITSSGCSLLVEKVVAVEHLSFDVLEQQISQVRATLEGDSDDRISHKVQDFFHQLTNADGVLTEA.

The protein belongs to the ATPase epsilon chain family. As to quaternary structure, F-type ATPases have 2 components, CF(1) - the catalytic core - and CF(0) - the membrane proton channel. CF(1) has five subunits: alpha(3), beta(3), gamma(1), delta(1), epsilon(1). CF(0) has three main subunits: a, b and c.

Its subcellular location is the cell inner membrane. In terms of biological role, produces ATP from ADP in the presence of a proton gradient across the membrane. This chain is ATP synthase epsilon chain, found in Bartonella quintana (strain Toulouse) (Rochalimaea quintana).